The chain runs to 242 residues: Biosynthetic peptidoglycan transglycosylase (242 aa).

The helical transmembrane segment at 19 to 39 (LMVVLAVFWGGGIALFSVAPV) threads the bilayer.

It belongs to the glycosyltransferase 51 family.

The protein localises to the cell inner membrane. The catalysed reaction is [GlcNAc-(1-&gt;4)-Mur2Ac(oyl-L-Ala-gamma-D-Glu-L-Lys-D-Ala-D-Ala)](n)-di-trans,octa-cis-undecaprenyl diphosphate + beta-D-GlcNAc-(1-&gt;4)-Mur2Ac(oyl-L-Ala-gamma-D-Glu-L-Lys-D-Ala-D-Ala)-di-trans,octa-cis-undecaprenyl diphosphate = [GlcNAc-(1-&gt;4)-Mur2Ac(oyl-L-Ala-gamma-D-Glu-L-Lys-D-Ala-D-Ala)](n+1)-di-trans,octa-cis-undecaprenyl diphosphate + di-trans,octa-cis-undecaprenyl diphosphate + H(+). It participates in cell wall biogenesis; peptidoglycan biosynthesis. Peptidoglycan polymerase that catalyzes glycan chain elongation from lipid-linked precursors. The protein is Biosynthetic peptidoglycan transglycosylase of Escherichia coli (strain 55989 / EAEC).